We begin with the raw amino-acid sequence, 318 residues long: Ubiquinol oxidase, mitochondrial (318 aa).

Residues 1 to 46 constitute a mitochondrion transit peptide; it reads MTVMRGLLNGGRYGNRYIWTAISLRHPEVMEGNGLESAVMQWRRML. Residues 143–163 form a helical membrane-spanning segment; that stretch reads AMMLETVAAVPGMVGGMLLHL. 3 residues coordinate Fe cation: E147, E186, and H189. Residues 205–225 traverse the membrane as a helical segment; it reads LLVLAVQGVFFNSFFVLYVLS. Positions 237, 288, and 291 each coordinate Fe cation.

The protein belongs to the alternative oxidase family. Homodimer; disulfide-linked. Fe cation serves as cofactor.

It is found in the mitochondrion inner membrane. It carries out the reaction 2 a ubiquinol + O2 = 2 a ubiquinone + 2 H2O. Functionally, catalyzes the cyanide-resistant oxidation of ubiquinol and the reduction of molecular oxygen to water, but does not translocate protons and consequently is not linked to oxidative phosphorylation. May increase respiration when the cytochrome respiratory pathway is restricted, or in response to low temperatures. This is Ubiquinol oxidase, mitochondrial (AOMI 1) from Mangifera indica (Mango).